A 227-amino-acid chain; its full sequence is Cytochrome c oxidase subunit 2 (227 aa).

The Mitochondrial intermembrane segment spans residues 1-14; sequence MAYPFQLGFQDATS. The chain crosses the membrane as a helical span at residues 15-45; sequence PIMEELLHFHDHTLMIVFLISSLVLYVISAM. Over 46–59 the chain is Mitochondrial matrix; the sequence is LTTNLTHTSTMDAQ. The chain crosses the membrane as a helical span at residues 60 to 87; sequence EVETIWTILPAIILITIALPSLRILYMM. Residues 88-227 lie on the Mitochondrial intermembrane side of the membrane; the sequence is DEINNPAMTI…YFEKWSVSML (140 aa). Residues histidine 161, cysteine 196, glutamate 198, cysteine 200, histidine 204, and methionine 207 each contribute to the Cu cation site. Glutamate 198 lines the Mg(2+) pocket. A Phosphotyrosine modification is found at tyrosine 218.

Belongs to the cytochrome c oxidase subunit 2 family. Component of the cytochrome c oxidase (complex IV, CIV), a multisubunit enzyme composed of 14 subunits. The complex is composed of a catalytic core of 3 subunits MT-CO1, MT-CO2 and MT-CO3, encoded in the mitochondrial DNA, and 11 supernumerary subunits COX4I, COX5A, COX5B, COX6A, COX6B, COX6C, COX7A, COX7B, COX7C, COX8 and NDUFA4, which are encoded in the nuclear genome. The complex exists as a monomer or a dimer and forms supercomplexes (SCs) in the inner mitochondrial membrane with NADH-ubiquinone oxidoreductase (complex I, CI) and ubiquinol-cytochrome c oxidoreductase (cytochrome b-c1 complex, complex III, CIII), resulting in different assemblies (supercomplex SCI(1)III(2)IV(1) and megacomplex MCI(2)III(2)IV(2)). Found in a complex with TMEM177, COA6, COX18, COX20, SCO1 and SCO2. Interacts with TMEM177 in a COX20-dependent manner. Interacts with COX20. Interacts with COX16. Cu cation is required as a cofactor.

It is found in the mitochondrion inner membrane. It catalyses the reaction 4 Fe(II)-[cytochrome c] + O2 + 8 H(+)(in) = 4 Fe(III)-[cytochrome c] + 2 H2O + 4 H(+)(out). In terms of biological role, component of the cytochrome c oxidase, the last enzyme in the mitochondrial electron transport chain which drives oxidative phosphorylation. The respiratory chain contains 3 multisubunit complexes succinate dehydrogenase (complex II, CII), ubiquinol-cytochrome c oxidoreductase (cytochrome b-c1 complex, complex III, CIII) and cytochrome c oxidase (complex IV, CIV), that cooperate to transfer electrons derived from NADH and succinate to molecular oxygen, creating an electrochemical gradient over the inner membrane that drives transmembrane transport and the ATP synthase. Cytochrome c oxidase is the component of the respiratory chain that catalyzes the reduction of oxygen to water. Electrons originating from reduced cytochrome c in the intermembrane space (IMS) are transferred via the dinuclear copper A center (CU(A)) of subunit 2 and heme A of subunit 1 to the active site in subunit 1, a binuclear center (BNC) formed by heme A3 and copper B (CU(B)). The BNC reduces molecular oxygen to 2 water molecules using 4 electrons from cytochrome c in the IMS and 4 protons from the mitochondrial matrix. The sequence is that of Cytochrome c oxidase subunit 2 (MT-CO2) from Macrotus californicus (Californian leaf-nosed bat).